The primary structure comprises 582 residues: Trans-ocimene synthase, chloroplastic (582 aa).

The N-terminal 35 residues, 1–35 (MSLIIQSLPHWSRIPPRPPQLSQFQNSSRPKPLIQ), are a transit peptide targeting the chloroplast. The (2E)-geranyl diphosphate site is built by Arg-296, Asp-333, Asp-337, Arg-474, and Asp-477. Asp-333 and Asp-337 together coordinate Mg(2+). The DDXXD motif signature appears at 333-337 (DDIYD). Asp-477, Thr-481, and Glu-485 together coordinate Mg(2+).

It belongs to the terpene synthase family. Tpsb subfamily. In terms of assembly, monomer. Requires Mg(2+) as cofactor. It depends on Mn(2+) as a cofactor. In terms of tissue distribution, expressed in male and female leaves. Barely detectable in fruits and shoots.

It localises to the plastid. The protein resides in the chloroplast. It catalyses the reaction (2E)-geranyl diphosphate = (E)-beta-ocimene + diphosphate. It functions in the pathway secondary metabolite biosynthesis; terpenoid biosynthesis. Functionally, monoterpene synthase (TPS) involved in the biosynthesis of monoterpene natural products used by traditional Chinese medicine to treat headache, inflammation and intoxication. Catalyzes the conversion of (2E)-geranyl diphosphate (GPP) into (E)-beta-ocimene. The polypeptide is Trans-ocimene synthase, chloroplastic (Litsea cubeba (Aromatic litsea)).